A 434-amino-acid polypeptide reads, in one-letter code: Eukaryotic translation initiation factor 3 subunit E (434 aa).

The 174-residue stretch at 219–392 (FFNHPKGRDL…GHVVMGTQPL (174 aa)) folds into the PCI domain.

It belongs to the eIF-3 subunit E family. As to quaternary structure, component of the eukaryotic translation initiation factor 3 (eIF-3) complex. The eIF-3 complex interacts with pix. Interacts with mxt.

Its subcellular location is the cytoplasm. Component of the eukaryotic translation initiation factor 3 (eIF-3) complex, which is involved in protein synthesis of a specialized repertoire of mRNAs and, together with other initiation factors, stimulates binding of mRNA and methionyl-tRNAi to the 40S ribosome. The eIF-3 complex specifically targets and initiates translation of a subset of mRNAs involved in cell proliferation. The sequence is that of Eukaryotic translation initiation factor 3 subunit E (eIF3-S6) from Drosophila virilis (Fruit fly).